We begin with the raw amino-acid sequence, 127 residues long: Large ribosomal subunit protein bL17 (127 aa).

This sequence belongs to the bacterial ribosomal protein bL17 family. Part of the 50S ribosomal subunit. Contacts protein L32.

The chain is Large ribosomal subunit protein bL17 from Lactiplantibacillus plantarum (strain ATCC BAA-793 / NCIMB 8826 / WCFS1) (Lactobacillus plantarum).